Here is a 448-residue protein sequence, read N- to C-terminus: Phosphoglucosamine mutase (448 aa).

Serine 102 acts as the Phosphoserine intermediate in catalysis. Residues serine 102, aspartate 242, aspartate 244, and aspartate 246 each contribute to the Mg(2+) site. Position 102 is a phosphoserine (serine 102).

This sequence belongs to the phosphohexose mutase family. It depends on Mg(2+) as a cofactor. In terms of processing, activated by phosphorylation.

The catalysed reaction is alpha-D-glucosamine 1-phosphate = D-glucosamine 6-phosphate. Its function is as follows. Catalyzes the conversion of glucosamine-6-phosphate to glucosamine-1-phosphate. This is Phosphoglucosamine mutase from Brevibacillus brevis (strain 47 / JCM 6285 / NBRC 100599).